The chain runs to 327 residues: ATP-dependent 6-phosphofructokinase (327 aa).

Gly-12 contributes to the ATP binding site. ADP-binding positions include 22-26 and 55-60; these read RGVVR and RYSVSD. ATP is bound by residues 73 to 74 and 103 to 106; these read RF and GDGS. Asp-104 lines the Mg(2+) pocket. A substrate-binding site is contributed by 127–129; the sequence is TID. Catalysis depends on Asp-129, which acts as the Proton acceptor. Arg-156 contributes to the ADP binding site. Substrate is bound by residues Arg-164 and 171–173; that span reads MGR. ADP contacts are provided by residues 187 to 189, Lys-213, and 215 to 217; these read GCE and KKH. Substrate contacts are provided by residues Glu-224, Arg-245, and 251-254; that span reads HIQR.

The protein belongs to the phosphofructokinase type A (PFKA) family. ATP-dependent PFK group I subfamily. Prokaryotic clade 'B1' sub-subfamily. In terms of assembly, homotetramer. Mg(2+) serves as cofactor.

It is found in the cytoplasm. It carries out the reaction beta-D-fructose 6-phosphate + ATP = beta-D-fructose 1,6-bisphosphate + ADP + H(+). It participates in carbohydrate degradation; glycolysis; D-glyceraldehyde 3-phosphate and glycerone phosphate from D-glucose: step 3/4. With respect to regulation, allosterically activated by ADP and other diphosphonucleosides, and allosterically inhibited by phosphoenolpyruvate. In terms of biological role, catalyzes the phosphorylation of D-fructose 6-phosphate to fructose 1,6-bisphosphate by ATP, the first committing step of glycolysis. This Hamiltonella defensa subsp. Acyrthosiphon pisum (strain 5AT) protein is ATP-dependent 6-phosphofructokinase.